Consider the following 348-residue polypeptide: Sec-independent protein translocase protein TatC (348 aa).

Helical transmembrane passes span 7 to 27, 162 to 182, 192 to 212, 244 to 264, 278 to 298, and 299 to 319; these read LCLTVSTILCAGFASNLMDIL, VVISFPLLLYFLLQFIIPGLL, CMAVGFGLFLAGTLFCYFIVL, MILMFGLAFELPVVVMPFVKL, YAIVAIAVLAAVITPTPDVAT, and MMLMAVPMYALYEICIILAWM.

This sequence belongs to the TatC family. In terms of assembly, forms a complex with TatA.

It is found in the cell membrane. In terms of biological role, part of the twin-arginine translocation (Tat) system that transports large folded proteins containing a characteristic twin-arginine motif in their signal peptide across membranes. The chain is Sec-independent protein translocase protein TatC from Akkermansia muciniphila (strain ATCC BAA-835 / DSM 22959 / JCM 33894 / BCRC 81048 / CCUG 64013 / CIP 107961 / Muc).